Consider the following 610-residue polypeptide: UvrABC system protein C (610 aa).

Residues 16 to 94 form the GIY-YIG domain; sequence SQPGVYRMYD…IKLYQPRYNV (79 aa). Positions 204 to 239 constitute a UVR domain; the sequence is DQVINQLVSRMEQASQNLAFEEAARLRDQIQAVRRV.

The protein belongs to the UvrC family. As to quaternary structure, interacts with UvrB in an incision complex.

The protein localises to the cytoplasm. Its function is as follows. The UvrABC repair system catalyzes the recognition and processing of DNA lesions. UvrC both incises the 5' and 3' sides of the lesion. The N-terminal half is responsible for the 3' incision and the C-terminal half is responsible for the 5' incision. This chain is UvrABC system protein C, found in Cronobacter sakazakii (strain ATCC BAA-894) (Enterobacter sakazakii).